Reading from the N-terminus, the 688-residue chain is Elongation factor G (688 aa).

The 275-residue stretch at 6–280 folds into the tr-type G domain; it reads KLFRNFGIMA…AVVDFLPSPI (275 aa). GTP contacts are provided by residues 15 to 22, 79 to 83, and 133 to 136; these read AHIDAGKT, DTPGH, and NKMD.

The protein belongs to the TRAFAC class translation factor GTPase superfamily. Classic translation factor GTPase family. EF-G/EF-2 subfamily.

Its subcellular location is the cytoplasm. Catalyzes the GTP-dependent ribosomal translocation step during translation elongation. During this step, the ribosome changes from the pre-translocational (PRE) to the post-translocational (POST) state as the newly formed A-site-bound peptidyl-tRNA and P-site-bound deacylated tRNA move to the P and E sites, respectively. Catalyzes the coordinated movement of the two tRNA molecules, the mRNA and conformational changes in the ribosome. The polypeptide is Elongation factor G (Ureaplasma urealyticum serovar 10 (strain ATCC 33699 / Western)).